The sequence spans 201 residues: Holliday junction branch migration complex subunit RuvA (201 aa).

Positions 1–64 (MYAYIRGKLT…EDAQLLYGFI (64 aa)) are domain I. Residues 65-143 (NEEEKDMFLS…ITRETTETLL (79 aa)) are domain II. The segment at 144-150 (SMNEENS) is flexible linker. Residues 151–201 (NSENLVKEALLALEALGYSKREISKVEKVLNKSTFDSVDEAVKLGLKTLVS) form a domain III region.

It belongs to the RuvA family. In terms of assembly, homotetramer. Forms an RuvA(8)-RuvB(12)-Holliday junction (HJ) complex. HJ DNA is sandwiched between 2 RuvA tetramers; dsDNA enters through RuvA and exits via RuvB. An RuvB hexamer assembles on each DNA strand where it exits the tetramer. Each RuvB hexamer is contacted by two RuvA subunits (via domain III) on 2 adjacent RuvB subunits; this complex drives branch migration. In the full resolvosome a probable DNA-RuvA(4)-RuvB(12)-RuvC(2) complex forms which resolves the HJ.

It is found in the cytoplasm. In terms of biological role, the RuvA-RuvB-RuvC complex processes Holliday junction (HJ) DNA during genetic recombination and DNA repair, while the RuvA-RuvB complex plays an important role in the rescue of blocked DNA replication forks via replication fork reversal (RFR). RuvA specifically binds to HJ cruciform DNA, conferring on it an open structure. The RuvB hexamer acts as an ATP-dependent pump, pulling dsDNA into and through the RuvAB complex. HJ branch migration allows RuvC to scan DNA until it finds its consensus sequence, where it cleaves and resolves the cruciform DNA. The sequence is that of Holliday junction branch migration complex subunit RuvA from Staphylococcus haemolyticus (strain JCSC1435).